Reading from the N-terminus, the 600-residue chain is Probable methyltransferase PMT7 (600 aa).

At 1-15 the chain is on the cytoplasmic side; the sequence is MGGGYVLFGSARSGQ. A helical; Signal-anchor for type II membrane protein membrane pass occupies residues 16–36; sequence MIMVALVLMVGSFYAGSIFGN. At 37 to 600 the chain is on the lumenal side; that stretch reads NSPIYISQPS…FCRKKFWAIL (564 aa). Asparagine 49, asparagine 98, asparagine 110, asparagine 157, asparagine 200, asparagine 204, asparagine 334, asparagine 447, and asparagine 484 each carry an N-linked (GlcNAc...) asparagine glycan.

The protein belongs to the methyltransferase superfamily.

The protein localises to the golgi apparatus membrane. The sequence is that of Probable methyltransferase PMT7 from Arabidopsis thaliana (Mouse-ear cress).